Here is a 299-residue protein sequence, read N- to C-terminus: Regucalcin (299 aa).

Glutamate 18 is a binding site for a divalent metal cation. Substrate-binding residues include arginine 101, asparagine 103, and glutamate 121. Asparagine 154 and aspartate 204 together coordinate a divalent metal cation. Aspartate 204 acts as the Proton donor/acceptor in catalysis.

It belongs to the SMP-30/CGR1 family. Zn(2+) is required as a cofactor. It depends on Mn(2+) as a cofactor. Requires Ca(2+) as cofactor. Mg(2+) serves as cofactor.

The protein resides in the cytoplasm. The catalysed reaction is D-glucono-1,5-lactone + H2O = D-gluconate + H(+). It functions in the pathway cofactor biosynthesis; L-ascorbate biosynthesis via UDP-alpha-D-glucuronate pathway; L-ascorbate from UDP-alpha-D-glucuronate: step 3/4. In terms of biological role, gluconolactonase with low activity towards other sugar lactones, including gulonolactone and galactonolactone. Catalyzes a key step in ascorbic acid (vitamin C) biosynthesis. Can also hydrolyze diisopropyl phosphorofluoridate and phenylacetate (in vitro). Calcium-binding protein. Modulates Ca(2+) signaling, and Ca(2+)-dependent cellular processes and enzyme activities. The sequence is that of Regucalcin from Gallus gallus (Chicken).